The following is a 283-amino-acid chain: Tetraspanin-33 (283 aa).

Residues 1–24 (MARRPGVPAAYGDEFSFVSPLVKY) are Cytoplasmic-facing. The chain crosses the membrane as a helical span at residues 25 to 45 (LLFFFNMLFWVISMVMVAVGV). Residues 46-64 (YARLMKHAEAALACLAVDP) lie on the Extracellular side of the membrane. The helical transmembrane segment at 65 to 85 (AILLIVVGVLMFLLTFCGCIG) threads the bilayer. Topologically, residues 86–96 (SLRENICLLQT) are cytoplasmic. Residues 97–117 (FSLCLTIVFLLQLAAGILGFV) traverse the membrane as a helical segment. Over 118-235 (FSDKARGKVS…DKLVNWIHSN (118 aa)) the chain is Extracellular. 4 disulfides stabilise this stretch: cysteine 156/cysteine 224, cysteine 157/cysteine 189, cysteine 173/cysteine 183, and cysteine 190/cysteine 203. The N-linked (GlcNAc...) asparagine glycan is linked to asparagine 172. A helical membrane pass occupies residues 236–256 (LFLLGGVALGLAIPQLVGILL). The Cytoplasmic segment spans residues 257–283 (SQVLVNQIKDQIKLQLYNQQHRADPWY).

This sequence belongs to the tetraspanin (TM4SF) family. As to quaternary structure, homodimer; disulfide-linked. Interacts (via extracellular domain) with ADAM10 (via extracellular domain). Interacts (via cytoplasmic domain) with PLEKHA7 (via WW domains); the interaction is dependent on PDZD11 being bound to PLEKHA7 and facilitates the docking of ADAM10 to zonula adherens. In terms of tissue distribution, predominantly expressed in erythroblasts.

The protein resides in the cell membrane. The protein localises to the cell junction. It is found in the adherens junction. It localises to the cytoplasm. Part of TspanC8 subgroup, composed of 6 members that interact with the transmembrane metalloprotease ADAM10. This interaction is required for ADAM10 exit from the endoplasmic reticulum and for enzymatic maturation and trafficking to the cell surface as well as substrate specificity. Different TspanC8/ADAM10 complexes have distinct substrates. Plays an important role in normal erythropoiesis. It has a role in the differentiation of erythroid progenitors. Negatively regulates ligand-induced Notch activity probably by regulating ADAM10 activity. Mediates docking of ADAM10 to zonula adherens by interacting with ADAM10 and, in a PDZD11-dependent manner, with the zonula adherens protein PLEKHA7. The sequence is that of Tetraspanin-33 (Tspan33) from Mus musculus (Mouse).